We begin with the raw amino-acid sequence, 461 residues long: MQKTYLLALVSLLASSLVEARSTIADQTRLDVGGSDESFDGIDGIDPNNSNVLTHKLMDKVIASSELLSLHRSLVEIKSISDNEQAVGGFLMDYLSSKNFTVEKQYVDYDDPTGKPIRSNRRFNIYAYPGDSASPGIILTSHIDTVPPFIPYSLSHPESDSFKRDDILISGRGTVDDKASVACQIIAAMEHLEKHPDIPIGLLFVVSEEVGGKGMSTFSDSRLNSGTYHTIIFGEPTERALVAGHKGMVSFGIRVHGKPAHSGYPWLGRSAVSEILPILAEVDRLGDIPVSQGGLPSSEKYGRTTLNIGFMSGGVAANVVPEQAVAKVAVRLAAGDPEDAKDIIFRAIRNAATKHRKDATVVISNGHEQPKGDIEVIFGLEAYGVVDIDADVDGFNVTTVNYGTDVPHWKIYGDNVKRYLYGPGTIFVAHGKDEALTVGELEAGLEGYKTLVAKAAERERT.

A signal peptide spans 1–20 (MQKTYLLALVSLLASSLVEA). 2 N-linked (GlcNAc...) asparagine glycosylation sites follow: asparagine 48 and asparagine 99. A Zn(2+)-binding site is contributed by aspartate 176. Glutamate 208 acts as the Proton acceptor in catalysis. A Zn(2+)-binding site is contributed by glutamate 209. The N-linked (GlcNAc...) asparagine glycan is linked to asparagine 396.

This sequence belongs to the peptidase M20A family. Requires Zn(2+) as cofactor.

It is found in the secreted. The polypeptide is Probable carboxypeptidase MGYG_04702 (Arthroderma gypseum (strain ATCC MYA-4604 / CBS 118893) (Microsporum gypseum)).